A 342-amino-acid polypeptide reads, in one-letter code: Ferredoxin--NADP reductase (342 aa).

8 residues coordinate FAD: Cys17, Asp36, Gln44, Tyr49, Ile89, Phe124, Asp289, and Thr330.

The protein belongs to the ferredoxin--NADP reductase type 2 family. As to quaternary structure, homodimer. Requires FAD as cofactor.

The catalysed reaction is 2 reduced [2Fe-2S]-[ferredoxin] + NADP(+) + H(+) = 2 oxidized [2Fe-2S]-[ferredoxin] + NADPH. This is Ferredoxin--NADP reductase from Rhodopseudomonas palustris (strain BisB5).